Here is a 331-residue protein sequence, read N- to C-terminus: tRNA U34 carboxymethyltransferase (331 aa).

Residues Lys91, Trp105, Lys110, Gly130, 152–154 (DPS), 181–182 (IE), Met196, Tyr200, and Arg315 each bind carboxy-S-adenosyl-L-methionine.

The protein belongs to the class I-like SAM-binding methyltransferase superfamily. CmoB family. As to quaternary structure, homotetramer.

The enzyme catalyses carboxy-S-adenosyl-L-methionine + 5-hydroxyuridine(34) in tRNA = 5-carboxymethoxyuridine(34) in tRNA + S-adenosyl-L-homocysteine + H(+). Its function is as follows. Catalyzes carboxymethyl transfer from carboxy-S-adenosyl-L-methionine (Cx-SAM) to 5-hydroxyuridine (ho5U) to form 5-carboxymethoxyuridine (cmo5U) at position 34 in tRNAs. The sequence is that of tRNA U34 carboxymethyltransferase from Shewanella baltica (strain OS155 / ATCC BAA-1091).